We begin with the raw amino-acid sequence, 490 residues long: Hippocampus abundant transcript 1 protein (490 aa).

Residue Met-1 is modified to N-acetylmethionine. The Extracellular segment spans residues 1 to 40 (MTQGKKKKRAANRSIMLAKKIIIKDGGTPQGIGSPSVYHA). N-linked (GlcNAc...) asparagine glycosylation occurs at Asn-12. Residues 41–61 (VIVIFLEFFAWGLLTAPTLVV) form a helical membrane-spanning segment. Over 62 to 74 (LHETFPKHTFLMN) the chain is Cytoplasmic. The helical transmembrane segment at 75–95 (GLIQGVKGLLSFLSAPLIGAL) threads the bilayer. The Extracellular portion of the chain corresponds to 96 to 103 (SDVWGRKS). A helical transmembrane segment spans residues 104-124 (FLLLTVFFTCAPIPLMKISPW). Over 125–126 (WY) the chain is Cytoplasmic. Residues 127–147 (FAVISVSGVFAVTFSVVFAYV) traverse the membrane as a helical segment. Topologically, residues 148–160 (ADITQEHERSMAY) are extracellular. Residues 161–181 (GLVSATFAASLVTSPAIGAYL) form a helical membrane-spanning segment. The Cytoplasmic portion of the chain corresponds to 182–188 (GRVYGDS). The chain crosses the membrane as a helical span at residues 189–209 (LVVVLATAIALLDICFILVAV). Topologically, residues 210-243 (PESLPEKMRPASWGAPISWEQADPFASLKKVGQD) are extracellular. Residues 244 to 264 (SIVLLICITVFLSYLPEAGQY) form a helical membrane-spanning segment. Residues 265–284 (SSFFLYLRQIMKFSPESVAA) lie on the Cytoplasmic side of the membrane. The helical transmembrane segment at 285-305 (FIAVLGILSIIAQTIVLSLLM) threads the bilayer. Residues 306–313 (RSIGNKNT) lie on the Extracellular side of the membrane. The chain crosses the membrane as a helical span at residues 314–334 (ILLGLGFQILQLAWYGFGSEP). Over 335 to 337 (WMM) the chain is Cytoplasmic. Residues 338–358 (WAAGAVAAMSSITFPAVSALV) traverse the membrane as a helical segment. The Extracellular segment spans residues 359-379 (SRTADADQQGVVQGMITGIRG). Residues 380–400 (LCNGLGPALYGFIFYIFHVEL) form a helical membrane-spanning segment. The Cytoplasmic segment spans residues 401–427 (KELPITGTDLGTNTSPQHHFEQNSIIP). The helical transmembrane segment at 428 to 448 (GPPFLFGACSVLLALLVALFI) threads the bilayer. At 449 to 490 (PEHTNLSLRSSSWRKHCGSHSHPHSTQAPGEAKEPLLQDTNV) the chain is on the extracellular side. Residue Asn-453 is glycosylated (N-linked (GlcNAc...) asparagine). A disordered region spans residues 466-490 (GSHSHPHSTQAPGEAKEPLLQDTNV).

The protein belongs to the major facilitator superfamily. Expressed in various tissues.

Its subcellular location is the membrane. In Mus musculus (Mouse), this protein is Hippocampus abundant transcript 1 protein.